A 314-amino-acid chain; its full sequence is Protein EXORDIUM (314 aa).

A signal peptide spans Met-1–Ala-21.

This sequence belongs to the EXORDIUM family. In terms of tissue distribution, expressed in root tips, vascular tissue of roots, shoot apex, rosette leaves and embryos.

It is found in the secreted. The protein localises to the extracellular space. It localises to the apoplast. In terms of biological role, required for cell expansion in leaves. May mediate brassinosteroid (BR)-induced leaf growth. May play a role in the control of BR responses in roots. May be involved in signaling processes that coordinate BR responses with environmental or developmental signals. The protein is Protein EXORDIUM (EXO) of Arabidopsis thaliana (Mouse-ear cress).